A 713-amino-acid chain; its full sequence is Probable tRNA (uracil-O(2)-)-methyltransferase (713 aa).

Disordered stretches follow at residues 49-92 (TLRS…REGT) and 480-508 (LHSR…HDAG). Ser76 bears the Phosphoserine mark. The span at 79 to 89 (GEPESGPRASR) shows a compositional bias: basic and acidic residues. Ser489 carries the phosphoserine modification. The C3H1-type zinc finger occupies 669–698 (FKTRICWFFAHHPDGCVLPAAQCPFAHGPE).

The protein belongs to the TRM44 family.

The protein resides in the cytoplasm. The enzyme catalyses uridine(44) in tRNA(Ser) + S-adenosyl-L-methionine = 2'-O-methyluridine(44) in tRNA(Ser) + S-adenosyl-L-homocysteine + H(+). In terms of biological role, probable adenosyl-L-methionine (AdoMet)-dependent tRNA (uracil-O(2)-)-methyltransferase. This chain is Probable tRNA (uracil-O(2)-)-methyltransferase (Trmt44), found in Mus musculus (Mouse).